The chain runs to 66 residues: UPF0337 protein BP1738 (66 aa).

Belongs to the UPF0337 (CsbD) family.

This is UPF0337 protein BP1738 from Bordetella pertussis (strain Tohama I / ATCC BAA-589 / NCTC 13251).